Here is a 253-residue protein sequence, read N- to C-terminus: tRNA pseudouridine synthase A (253 aa).

Residue Asp-53 is the Nucleophile of the active site. Tyr-111 serves as a coordination point for substrate.

Belongs to the tRNA pseudouridine synthase TruA family. As to quaternary structure, homodimer.

It carries out the reaction uridine(38/39/40) in tRNA = pseudouridine(38/39/40) in tRNA. Its function is as follows. Formation of pseudouridine at positions 38, 39 and 40 in the anticodon stem and loop of transfer RNAs. The protein is tRNA pseudouridine synthase A of Chlorobium luteolum (strain DSM 273 / BCRC 81028 / 2530) (Pelodictyon luteolum).